Here is a 376-residue protein sequence, read N- to C-terminus: Enoyl-[acyl-carrier-protein] reductase, mitochondrial (376 aa).

A mitochondrion-targeting transit peptide spans 1–12; sequence MLRTLRTSQLAR. Tyr-79 functions as the Proton donor in the catalytic mechanism. Residues Asn-160, 183-186, 206-208, 277-280, 302-304, and Lys-368 contribute to the NADP(+) site; these read NSGV, RDR, YGGM, and YWL.

The protein belongs to the zinc-containing alcohol dehydrogenase family. Quinone oxidoreductase subfamily. In terms of assembly, homodimer.

It is found in the mitochondrion matrix. The enzyme catalyses a 2,3-saturated acyl-[ACP] + NADP(+) = a (2E)-enoyl-[ACP] + NADPH + H(+). Functionally, catalyzes the NADPH-dependent reduction of trans-2-enoyl thioesters in mitochondrial fatty acid synthesis (fatty acid synthesis type II). Fatty acid chain elongation in mitochondria uses acyl carrier protein (ACP) as an acyl group carrier, but the enzyme accepts both ACP and CoA thioesters as substrates in vitro. Required for respiration and the maintenance of the mitochondrial compartment. The sequence is that of Enoyl-[acyl-carrier-protein] reductase, mitochondrial (ETR1) from Yarrowia lipolytica (strain CLIB 122 / E 150) (Yeast).